We begin with the raw amino-acid sequence, 91 residues long: Cell division topological specificity factor (91 aa).

Belongs to the MinE family.

Prevents the cell division inhibition by proteins MinC and MinD at internal division sites while permitting inhibition at polar sites. This ensures cell division at the proper site by restricting the formation of a division septum at the midpoint of the long axis of the cell. In Chloroflexus aurantiacus (strain ATCC 29366 / DSM 635 / J-10-fl), this protein is Cell division topological specificity factor.